The following is a 100-amino-acid chain: NADH-quinone oxidoreductase subunit K (100 aa).

3 helical membrane-spanning segments follow: residues 4-24 (ITYY…GVLV), 29-49 (LVVF…FVAF), and 63-83 (FFVI…VIAV).

Belongs to the complex I subunit 4L family. NDH-1 is composed of 14 different subunits. Subunits NuoA, H, J, K, L, M, N constitute the membrane sector of the complex.

The protein localises to the cell inner membrane. The catalysed reaction is a quinone + NADH + 5 H(+)(in) = a quinol + NAD(+) + 4 H(+)(out). In terms of biological role, NDH-1 shuttles electrons from NADH, via FMN and iron-sulfur (Fe-S) centers, to quinones in the respiratory chain. The immediate electron acceptor for the enzyme in this species is believed to be ubiquinone. Couples the redox reaction to proton translocation (for every two electrons transferred, four hydrogen ions are translocated across the cytoplasmic membrane), and thus conserves the redox energy in a proton gradient. In Myxococcus xanthus (strain DK1622), this protein is NADH-quinone oxidoreductase subunit K.